A 512-amino-acid chain; its full sequence is Aldehyde dehydrogenase B (512 aa).

Catalysis depends on residues E268 and C307.

In terms of assembly, homotetramer.

The catalysed reaction is an aldehyde + NADP(+) + H2O = a carboxylate + NADPH + 2 H(+). The enzyme catalyses acetaldehyde + NADP(+) + H2O = acetate + NADPH + 2 H(+). It carries out the reaction chloroacetaldehyde + NADP(+) + H2O = chloroacetate + NADPH + 2 H(+). It catalyses the reaction propanal + NADP(+) + H2O = propanoate + NADPH + 2 H(+). Magnesium increases enzyme activity with various substrates. Functionally, catalyzes the NADP(+)-dependent oxidation of diverse aldehydes to their corresponding carboxylic acids, with a preference for acetaldehyde and chloroacetaldehyde. May play a role in detoxifying aldehydes present during stationary phase. Cannot use NAD(+) instead of NADP(+) as the electron acceptor. To a lesser extent is also able to oxidize propionaldehyde (propanal), benzaldehyde, mafosfamide, and 4-hydroperoxycyclophosphamide. Does not use either glyceraldehyde or glycolaldehyde as substrates. This Escherichia coli (strain K12) protein is Aldehyde dehydrogenase B.